The sequence spans 89 residues: Large ribosomal subunit protein eL31 (89 aa).

This sequence belongs to the eukaryotic ribosomal protein eL31 family.

The sequence is that of Large ribosomal subunit protein eL31 from Picrophilus torridus (strain ATCC 700027 / DSM 9790 / JCM 10055 / NBRC 100828 / KAW 2/3).